Reading from the N-terminus, the 209-residue chain is Small ribosomal subunit protein uS4 (209 aa).

Residues 98-158 enclose the S4 RNA-binding domain; that stretch reads SRVDNIVYRL…EKSRSLAAIK (61 aa).

It belongs to the universal ribosomal protein uS4 family. Part of the 30S ribosomal subunit. Contacts protein S5. The interaction surface between S4 and S5 is involved in control of translational fidelity.

Its function is as follows. One of the primary rRNA binding proteins, it binds directly to 16S rRNA where it nucleates assembly of the body of the 30S subunit. With S5 and S12 plays an important role in translational accuracy. This chain is Small ribosomal subunit protein uS4, found in Pseudothermotoga lettingae (strain ATCC BAA-301 / DSM 14385 / NBRC 107922 / TMO) (Thermotoga lettingae).